The chain runs to 436 residues: GTPase Der (436 aa).

2 consecutive EngA-type G domains span residues 4 to 167 and 176 to 351; these read PIVA…GEEE and IRLS…ENHK. Residues 10 to 17, 57 to 61, 119 to 122, 182 to 189, 229 to 233, and 294 to 297 contribute to the GTP site; these read GRPNVGKS, DTGGI, NKVD, DTAGM, and NKWD. One can recognise a KH-like domain in the interval 352-436; sequence KRVQSSTLNE…PIHIIARKRN (85 aa).

Belongs to the TRAFAC class TrmE-Era-EngA-EngB-Septin-like GTPase superfamily. EngA (Der) GTPase family. As to quaternary structure, associates with the 50S ribosomal subunit.

Its function is as follows. GTPase that plays an essential role in the late steps of ribosome biogenesis. The protein is GTPase Der of Staphylococcus aureus (strain USA300).